The primary structure comprises 637 residues: Neutral ceramidase (637 aa).

His-34 provides a ligand contact to Mg(2+). Residues His-96 and His-204 each coordinate Zn(2+). Ser-256 acts as the Nucleophile in catalysis. Zn(2+) contacts are provided by Glu-417 and Tyr-453. Mg(2+) is bound by residues Asp-575, Asp-577, and Thr-580.

The protein belongs to the neutral ceramidase family. Zn(2+) serves as cofactor. Requires Mg(2+) as cofactor.

It carries out the reaction an N-acylsphing-4-enine + H2O = sphing-4-enine + a fatty acid. The enzyme catalyses an N-acylsphinganine + H2O = sphinganine + a fatty acid. It catalyses the reaction an N-acyl-(4R)-4-hydroxysphinganine + H2O = (4R)-hydroxysphinganine + a fatty acid. The catalysed reaction is N-(9Z-octadecenoyl)-sphing-4-enine + H2O = sphing-4-enine + (9Z)-octadecenoate. It carries out the reaction N-(hexanoyl)sphing-4-enine + H2O = hexanoate + sphing-4-enine. The enzyme catalyses N-hexadecanoylsphing-4-enine + H2O = sphing-4-enine + hexadecanoate. It catalyses the reaction N-octadecanoylsphing-4-enine + H2O = sphing-4-enine + octadecanoate. The catalysed reaction is N-eicosanoyl-sphing-4-enine + H2O = eicosanoate + sphing-4-enine. It carries out the reaction N-(15Z-tetracosenoyl)-sphing-4-enine + H2O = (15Z)-tetracosenoate + sphing-4-enine. The enzyme catalyses N-tetracosanoyl-sphing-4-enine + H2O = tetracosanoate + sphing-4-enine. Its activity is regulated as follows. 90% of activity is inhibited by nickel, zinc and calcium ions. Magnesium, cobalt, copper and manganese ions inhibit between 50 and 80% of activity. In terms of biological role, catalyzes the cleavage of the N-acyl linkage of the ceramides (Cers) to yield sphingosine (Sph) and free fatty acid. Also catalyzes the synthesis of Cers from Sph and fatty acid. Cers containning C6-C24 fatty acids are well hydrolyzed, and Cers with mono unsaturated fatty acids are much more hydrolyzed than those with saturated fatty acids. This is Neutral ceramidase from Mycobacterium tuberculosis (strain ATCC 25618 / H37Rv).